The chain runs to 238 residues: Ribonuclease PH (238 aa).

Positions 67–87 are disordered; that stretch reads PRSTHTRSDREAARGKQSGRT. Phosphate-binding positions include R86 and 124–126; that span reads GTR.

It belongs to the RNase PH family. As to quaternary structure, homohexameric ring arranged as a trimer of dimers.

The enzyme catalyses tRNA(n+1) + phosphate = tRNA(n) + a ribonucleoside 5'-diphosphate. Functionally, phosphorolytic 3'-5' exoribonuclease that plays an important role in tRNA 3'-end maturation. Removes nucleotide residues following the 3'-CCA terminus of tRNAs; can also add nucleotides to the ends of RNA molecules by using nucleoside diphosphates as substrates, but this may not be physiologically important. Probably plays a role in initiation of 16S rRNA degradation (leading to ribosome degradation) during starvation. The polypeptide is Ribonuclease PH (Ralstonia nicotianae (strain ATCC BAA-1114 / GMI1000) (Ralstonia solanacearum)).